Reading from the N-terminus, the 208-residue chain is NAD(P)H-quinone oxidoreductase subunit I (208 aa).

2 consecutive 4Fe-4S ferredoxin-type domains span residues 55-84 and 95-124; these read GRIH…VDWV and RNYS…MTEE. [4Fe-4S] cluster-binding residues include Cys-64, Cys-67, Cys-70, Cys-74, Cys-104, Cys-107, Cys-110, and Cys-114.

It belongs to the complex I 23 kDa subunit family. As to quaternary structure, NDH-1 is composed of at least 11 different subunits. It depends on [4Fe-4S] cluster as a cofactor.

The protein resides in the cellular thylakoid membrane. It catalyses the reaction a plastoquinone + NADH + (n+1) H(+)(in) = a plastoquinol + NAD(+) + n H(+)(out). The catalysed reaction is a plastoquinone + NADPH + (n+1) H(+)(in) = a plastoquinol + NADP(+) + n H(+)(out). Functionally, NDH-1 shuttles electrons from an unknown electron donor, via FMN and iron-sulfur (Fe-S) centers, to quinones in the respiratory and/or the photosynthetic chain. The immediate electron acceptor for the enzyme in this species is believed to be plastoquinone. Couples the redox reaction to proton translocation, and thus conserves the redox energy in a proton gradient. This chain is NAD(P)H-quinone oxidoreductase subunit I, found in Prochlorococcus marinus (strain MIT 9215).